Here is a 1941-residue protein sequence, read N- to C-terminus: Xin actin-binding repeat-containing protein 1 (1941 aa).

The segment at 1–41 (MAEPQKSSKVAIKKMEDDLPPPPIPDSIQVIAPASQDPNPL) is disordered. 27 Xin repeats span residues 108–123 (GEVQ…WALD), 143–158 (GDVK…QSVN), 176–191 (GDVH…QPLD), 215–230 (GDVK…QSLD), 255–270 (GDVK…EPLC), 293–308 (NAVR…QPLD), 331–346 (PDVS…QPLD), 368–383 (ADVT…QALD), 402–417 (GDVK…QPME), 439–454 (GDVK…CPLG), 475–490 (GDVK…LPLD), 510–525 (GNVK…TPLY), 548–563 (GDVK…RPLD), 586–601 (GDVR…QPMD), 624–639 (GDVK…QPMH), 658–673 (ADVK…QPLD), 697–712 (VDVK…EPLG), 736–751 (GEVS…KPLD), 769–784 (GSVH…YPMD), 805–820 (GDVG…YSLD), 842–857 (ANVK…QPLY), 880–895 (GDVK…KPLD), 917–932 (GDVQ…EPLD), 951–966 (GDVQ…QQVG), 982–997 (GDVR…QPVD), 1020–1035 (GDVK…QPMD), and 1055–1070 (ADVK…TPLD). A compositionally biased stretch (polar residues) spans 1514-1565 (ASKQETKTLQSTIHQQESASTMRENTSTAIRTSTTRVQEASRTHTSVSQKSI). Disordered regions lie at residues 1514–1568 (ASKQ…IASH), 1715–1856 (ASGS…PPPA), and 1914–1941 (YKAR…GEVG). Positions 1820-1833 (SASTNNSTNRSTKS) are enriched in low complexity. Residues 1834–1843 (VPPPVPPKPP) are compositionally biased toward pro residues.

Belongs to the Xin family. Expressed at intercalated disks in the heart (at protein level).

It localises to the cell junction. Its subcellular location is the adherens junction. It is found in the desmosome. Involved in cardiac morphogenesis, including heart midline formation, cardiac tubule looping, myocardial formation and maintenance of heart beat speed and rhythm. May protect actin filaments from depolymerization. May play a role in development of normal skeletal muscle morphology, muscle fiber type composition and regulation of muscle satellite cell activation and survival. This chain is Xin actin-binding repeat-containing protein 1, found in Gallus gallus (Chicken).